The primary structure comprises 940 residues: Vacuolar protein sorting-associated protein 54 (940 aa).

Thr30 is modified (phosphothreonine). Positions 192–218 (QQLERDKPLENGAQGAPGPGTGGQTPT) are disordered. A coiled-coil region spans residues 299-325 (HAILAEMEQAADQVRQLRAALAELHSH).

This sequence belongs to the VPS54 family.

The protein localises to the golgi apparatus. It localises to the trans-Golgi network. In terms of biological role, may be involved in retrograde transport from early and late endosomes to late Golgi. Required during spermatogenesis for sperm individualization. This Drosophila melanogaster (Fruit fly) protein is Vacuolar protein sorting-associated protein 54 (scat).